A 238-amino-acid polypeptide reads, in one-letter code: Probable solute-binding protein AdeT2 (238 aa).

This sequence belongs to the bacterial solute-binding protein 7 family.

Functionally, mediates antimicrobial resistance via active efflux. Contributes to resistance to antibiotics such as chloramphenicol, erythromycin and novobiocin. May be part of a tripartite ATP-independent periplasmic (TRAP) transport system. The sequence is that of Probable solute-binding protein AdeT2 from Acinetobacter baumannii.